Here is a 51-residue protein sequence, read N- to C-terminus: Large ribosomal subunit protein eL39 (51 aa).

It belongs to the eukaryotic ribosomal protein eL39 family. Interacts with YIH1.

The protein is Large ribosomal subunit protein eL39 (RPL39) of Kluyveromyces lactis (strain ATCC 8585 / CBS 2359 / DSM 70799 / NBRC 1267 / NRRL Y-1140 / WM37) (Yeast).